An 86-amino-acid polypeptide reads, in one-letter code: Large ribosomal subunit protein bL27 (86 aa).

The segment covering 1-10 has biased composition (gly residues); that stretch reads MAQKKGGGST. Residues 1-21 are disordered; it reads MAQKKGGGSTRNGRDSESKRL.

The protein belongs to the bacterial ribosomal protein bL27 family.

The chain is Large ribosomal subunit protein bL27 from Cupriavidus taiwanensis (strain DSM 17343 / BCRC 17206 / CCUG 44338 / CIP 107171 / LMG 19424 / R1) (Ralstonia taiwanensis (strain LMG 19424)).